A 596-amino-acid chain; its full sequence is Probable lysosomal cobalamin transporter (596 aa).

A run of 10 helical transmembrane segments spans residues 13–33, 45–65, 99–119, 150–170, 201–221, 318–338, 353–373, 381–401, 425–445, and 512–532; these read IWVAYAVAVALVLLVAIITTF, VSIVAIVSLTSLLATVFLLPV, VVYYTLYSFDALLCLIVIPFA, LGFVFLVLILFLLGFFVPAAG, LLITLGTFLYTLYTGAGLALL, LLGGILLLLLSILVWASMLIT, GYILGHINVFQPVNWIFVQSA, ILMALLVLFFFGSSITGIATI, IATVMLALIILAINYAIAMIV, and VFGAIDFWAQFAFLGVFMVVF. A glycan (N-linked (GlcNAc...) asparagine) is linked at N543. The disordered stretch occupies residues 576 to 596; the sequence is GRAKNRNGYGTGGGEGSNGRG. Residues 584–596 are compositionally biased toward gly residues; that stretch reads YGTGGGEGSNGRG.

This sequence belongs to the LIMR family. LMBRD1 subfamily.

It localises to the lysosome membrane. Functionally, probable lysosomal cobalamin transporter. Required to export cobalamin from lysosomes allowing its conversion to cofactors. The polypeptide is Probable lysosomal cobalamin transporter (Podospora anserina (strain S / ATCC MYA-4624 / DSM 980 / FGSC 10383) (Pleurage anserina)).